We begin with the raw amino-acid sequence, 457 residues long: Siroheme synthase (457 aa).

Residues 1–204 form a precorrin-2 dehydrogenase /sirohydrochlorin ferrochelatase region; sequence MDHLPIFCQL…NDQKAITETT (204 aa). NAD(+)-binding positions include 22 to 23 and 43 to 44; these read DV and LA. Phosphoserine is present on Ser-128. Residues 216 to 457 form a uroporphyrinogen-III C-methyltransferase region; sequence GEVVLVGAGP…RDKLNWFSNH (242 aa). Pro-225 serves as a coordination point for S-adenosyl-L-methionine. Catalysis depends on Asp-248, which acts as the Proton acceptor. Lys-270 serves as the catalytic Proton donor. Residues 301–303, Ile-306, 331–332, Met-382, and Gly-411 contribute to the S-adenosyl-L-methionine site; these read GGD and TA.

The protein in the N-terminal section; belongs to the precorrin-2 dehydrogenase / sirohydrochlorin ferrochelatase family. This sequence in the C-terminal section; belongs to the precorrin methyltransferase family.

The catalysed reaction is uroporphyrinogen III + 2 S-adenosyl-L-methionine = precorrin-2 + 2 S-adenosyl-L-homocysteine + H(+). It catalyses the reaction precorrin-2 + NAD(+) = sirohydrochlorin + NADH + 2 H(+). It carries out the reaction siroheme + 2 H(+) = sirohydrochlorin + Fe(2+). It participates in cofactor biosynthesis; adenosylcobalamin biosynthesis; precorrin-2 from uroporphyrinogen III: step 1/1. Its pathway is cofactor biosynthesis; adenosylcobalamin biosynthesis; sirohydrochlorin from precorrin-2: step 1/1. It functions in the pathway porphyrin-containing compound metabolism; siroheme biosynthesis; precorrin-2 from uroporphyrinogen III: step 1/1. The protein operates within porphyrin-containing compound metabolism; siroheme biosynthesis; siroheme from sirohydrochlorin: step 1/1. It participates in porphyrin-containing compound metabolism; siroheme biosynthesis; sirohydrochlorin from precorrin-2: step 1/1. In terms of biological role, multifunctional enzyme that catalyzes the SAM-dependent methylations of uroporphyrinogen III at position C-2 and C-7 to form precorrin-2 via precorrin-1. Then it catalyzes the NAD-dependent ring dehydrogenation of precorrin-2 to yield sirohydrochlorin. Finally, it catalyzes the ferrochelation of sirohydrochlorin to yield siroheme. This Shigella dysenteriae serotype 1 (strain Sd197) protein is Siroheme synthase.